The sequence spans 398 residues: SEC12-like protein 1 (398 aa).

At M1 the chain carries N-acetylmethionine. Residues 1–337 (MEIEEASRES…TVPKEWKEWQ (337 aa)) lie on the Cytoplasmic side of the membrane. 5 WD repeats span residues 71 to 110 (DSDG…TGIT), 120 to 159 (QNAG…VILD), 162 to 201 (KAHK…PLST), 252 to 291 (LSRK…IYHY), and 296 to 334 (HLGQ…KEWK). Residues 338-358 (IYALLFCLFMASVIAAYVFFE) traverse the membrane as a helical segment. Residues 359–398 (NSDSFWKLPMGKDQKRPKISLFGGSSSTPSEDHSRWNLDL) are Lumenal-facing.

Ubiquitous with higher levels in flowers, roots and senescing leaves.

It is found in the endoplasmic reticulum membrane. In terms of biological role, involved in Pi uptake by facilitating the trafficking of PHT1-1/PHT1;1 from the endoplasmic reticulum to the plasma membrane. The protein is SEC12-like protein 1 (PHF1) of Arabidopsis thaliana (Mouse-ear cress).